A 184-amino-acid chain; its full sequence is Signal peptidase complex catalytic subunit SEC11 (184 aa).

Residues 1 to 28 lie on the Cytoplasmic side of the membrane; the sequence is MDFIKEQYNSLVLDLRKTFRNKRDGLSH. Residues 29–49 form a helical; Signal-anchor for type II membrane protein membrane-spanning segment; the sequence is ILNVICLLLNALMIWKLLVVF. The Lumenal segment spans residues 50-184; it reads TGCESPVVVV…MLIMILMGYE (135 aa). Residues Ser-63, His-101, and Asp-127 each act as charge relay system in the active site. Residues 170–181 form a C-terminal short (CTS) helix region; sequence AIVSIMLIMILM.

It belongs to the peptidase S26B family. In terms of assembly, component of the signal peptidase complex (SPC) composed of a catalytic subunit SEC11/SPC21 and three accessory subunits SPC25, SPC3/SPC22, SPC1/SPC12. Within the complex, interacts with SPC25. The complex induces a local thinning of the ER membrane which is used to measure the length of the signal peptide (SP) h-region of protein substrates. This ensures the selectivity of the complex towards h-regions shorter than 18-20 amino acids. The complex interacts with the SEC61 channel-forming translocon complex and is involved in the import of classical signal sequence-containing proteins. Post-translationally, phosphorylated. Phosphorylation increases catalytic activity.

It localises to the endoplasmic reticulum membrane. It carries out the reaction Cleavage of hydrophobic, N-terminal signal or leader sequences from secreted and periplasmic proteins.. With respect to regulation, phosphorylation increases catalytic activity. Ca(2+) slightly increases catalytic activity in vitro. Catalytic component of the signal peptidase complex (SPC) which catalyzes the cleavage of N-terminal signal sequences from nascent proteins as they are translocated into the lumen of the endoplasmic reticulum. Specifically cleaves N-terminal signal peptides that contain a hydrophobic alpha-helix (h-region) shorter than 18-20 amino acids. In Plasmodium falciparum (isolate 3D7), this protein is Signal peptidase complex catalytic subunit SEC11.